A 467-amino-acid chain; its full sequence is UPF0236 protein TTE0033/TTE0744/TTE0838/TTE0852/TTE1082/TTE1247/TTE1519/TTE1678/TTE1739/TTE1823/TTE2212 (467 aa).

This sequence belongs to the UPF0236 family.

The polypeptide is UPF0236 protein TTE0033/TTE0744/TTE0838/TTE0852/TTE1082/TTE1247/TTE1519/TTE1678/TTE1739/TTE1823/TTE2212 (Caldanaerobacter subterraneus subsp. tengcongensis (strain DSM 15242 / JCM 11007 / NBRC 100824 / MB4) (Thermoanaerobacter tengcongensis)).